The chain runs to 116 residues: uncharacterized protein (116 aa).

Disordered regions lie at residues 1–26 (MLLT…KSSN) and 74–116 (ENDL…KSSI). Residues 14–26 (SANSTDDSSKSSN) are compositionally biased toward low complexity. Residues 74-86 (ENDLKRSKSQGRE) are compositionally biased toward basic and acidic residues. The span at 104–116 (NTASEIQRTKSSI) shows a compositional bias: polar residues.

This is an uncharacterized protein from Saccharomyces cerevisiae (strain ATCC 204508 / S288c) (Baker's yeast).